The chain runs to 251 residues: tRNA (guanine-N(1)-)-methyltransferase (251 aa).

Residues glycine 113 and 133–138 each bind S-adenosyl-L-methionine; that span reads IGDYVL.

This sequence belongs to the RNA methyltransferase TrmD family. As to quaternary structure, homodimer.

It localises to the cytoplasm. It carries out the reaction guanosine(37) in tRNA + S-adenosyl-L-methionine = N(1)-methylguanosine(37) in tRNA + S-adenosyl-L-homocysteine + H(+). Specifically methylates guanosine-37 in various tRNAs. The chain is tRNA (guanine-N(1)-)-methyltransferase from Methylococcus capsulatus (strain ATCC 33009 / NCIMB 11132 / Bath).